Consider the following 251-residue polypeptide: Triosephosphate isomerase (251 aa).

9-11 lines the substrate pocket; that stretch reads NWK. His95 serves as the catalytic Electrophile. The active-site Proton acceptor is Glu167. Residues Gly173, Ser212, and 233-234 each bind substrate; that span reads GG.

The protein belongs to the triosephosphate isomerase family. Homodimer.

It is found in the cytoplasm. It carries out the reaction D-glyceraldehyde 3-phosphate = dihydroxyacetone phosphate. It functions in the pathway carbohydrate biosynthesis; gluconeogenesis. It participates in carbohydrate degradation; glycolysis; D-glyceraldehyde 3-phosphate from glycerone phosphate: step 1/1. Its function is as follows. Involved in the gluconeogenesis. Catalyzes stereospecifically the conversion of dihydroxyacetone phosphate (DHAP) to D-glyceraldehyde-3-phosphate (G3P). This chain is Triosephosphate isomerase, found in Pseudomonas syringae pv. tomato (strain ATCC BAA-871 / DC3000).